A 242-amino-acid polypeptide reads, in one-letter code: Small ribosomal subunit protein eS6 (242 aa).

Basic and acidic residues predominate over residues 219–229; the sequence is EKKSEKAEEKK. Residues 219–242 are disordered; sequence EKKSEKAEEKKRRASSLRTQSVQA. Phosphoserine is present on residues Ser-233 and Ser-234.

Belongs to the eukaryotic ribosomal protein eS6 family. Post-translationally, phosphorylated.

In Yarrowia lipolytica (strain CLIB 122 / E 150) (Yeast), this protein is Small ribosomal subunit protein eS6 (RPS6).